The primary structure comprises 307 residues: 4-hydroxybenzoate geranyltransferase 1 (307 aa).

8 consecutive transmembrane segments (helical) span residues 38–58 (PIGS…AADL), 62–82 (PKML…GCTI), 120–140 (LFIG…LAIV), 154–174 (ITYW…LLGS), 179–199 (GSVV…WTLV), 230–250 (MWIS…GLIL), 252–272 (IGLP…WQIF), and 286–306 (FVSN…GRLF).

The protein belongs to the UbiA prenyltransferase family. Requires Mg(2+) as cofactor. Expressed only in roots.

It localises to the endoplasmic reticulum membrane. It carries out the reaction 4-hydroxybenzoate + (2E)-geranyl diphosphate = 3-geranyl-4-hydroxybenzoate + diphosphate. In terms of biological role, prenyltransferase involved in the biosynthesis of shikonin, a naphthoquinone secondary metabolite. Could accept only geranyl diphosphate and not dimethylallyl diphosphate, farnesyl diphosphate, or geranylgeranyl diphosphate as substrate. This Lithospermum erythrorhizon (Purple gromwell) protein is 4-hydroxybenzoate geranyltransferase 1 (PGT-1).